The chain runs to 76 residues: Virulence-associated protein VagC (76 aa).

The SpoVT-AbrB domain maps to 4–45 (VSIFKNGNNRAIRLPRDLDFEGVSELEIVREGDSIILRPVRP).

It belongs to the VapB family.

In Salmonella dublin, this protein is Virulence-associated protein VagC (vagC).